The following is a 122-amino-acid chain: S-adenosylmethionine decarboxylase proenzyme (122 aa).

The active-site Schiff-base intermediate with substrate; via pyruvic acid is S69. The residue at position 69 (S69) is a Pyruvic acid (Ser); by autocatalysis. Catalysis depends on H74, which acts as the Proton acceptor; for processing activity. Catalysis depends on C89, which acts as the Proton donor; for catalytic activity.

Belongs to the prokaryotic AdoMetDC family. Type 1 subfamily. As to quaternary structure, heterotetramer of two alpha and two beta chains arranged as a dimer of alpha/beta heterodimers. Pyruvate serves as cofactor. Post-translationally, is synthesized initially as an inactive proenzyme. Formation of the active enzyme involves a self-maturation process in which the active site pyruvoyl group is generated from an internal serine residue via an autocatalytic post-translational modification. Two non-identical subunits are generated from the proenzyme in this reaction, and the pyruvate is formed at the N-terminus of the alpha chain, which is derived from the carboxyl end of the proenzyme. The post-translation cleavage follows an unusual pathway, termed non-hydrolytic serinolysis, in which the side chain hydroxyl group of the serine supplies its oxygen atom to form the C-terminus of the beta chain, while the remainder of the serine residue undergoes an oxidative deamination to produce ammonia and the pyruvoyl group blocking the N-terminus of the alpha chain.

The enzyme catalyses S-adenosyl-L-methionine + H(+) = S-adenosyl 3-(methylsulfanyl)propylamine + CO2. It participates in amine and polyamine biosynthesis; S-adenosylmethioninamine biosynthesis; S-adenosylmethioninamine from S-adenosyl-L-methionine: step 1/1. Its function is as follows. Catalyzes the decarboxylation of S-adenosylmethionine to S-adenosylmethioninamine (dcAdoMet), the propylamine donor required for the synthesis of the polyamines spermine and spermidine from the diamine putrescine. This is S-adenosylmethionine decarboxylase proenzyme from Sulfolobus acidocaldarius (strain ATCC 33909 / DSM 639 / JCM 8929 / NBRC 15157 / NCIMB 11770).